Here is a 73-residue protein sequence, read N- to C-terminus: Translation initiation factor IF-1 (73 aa).

The region spanning 1–72 is the S1-like domain; that stretch reads MAKEDVIEVE…SRGRITYRYR (72 aa).

The protein belongs to the IF-1 family. As to quaternary structure, component of the 30S ribosomal translation pre-initiation complex which assembles on the 30S ribosome in the order IF-2 and IF-3, IF-1 and N-formylmethionyl-tRNA(fMet); mRNA recruitment can occur at any time during PIC assembly.

It is found in the cytoplasm. Its function is as follows. One of the essential components for the initiation of protein synthesis. Stabilizes the binding of IF-2 and IF-3 on the 30S subunit to which N-formylmethionyl-tRNA(fMet) subsequently binds. Helps modulate mRNA selection, yielding the 30S pre-initiation complex (PIC). Upon addition of the 50S ribosomal subunit IF-1, IF-2 and IF-3 are released leaving the mature 70S translation initiation complex. The polypeptide is Translation initiation factor IF-1 (Rubrobacter xylanophilus (strain DSM 9941 / JCM 11954 / NBRC 16129 / PRD-1)).